The following is a 334-amino-acid chain: Isocitrate/homoisocitrate dehydrogenase (334 aa).

70 to 72 (ATS) is an NADH binding site. (2R,3S)-homoisocitrate contacts are provided by serine 72, arginine 85, arginine 88, arginine 98, arginine 118, tyrosine 125, lysine 171, and asparagine 173. Asparagine 173 serves as a coordination point for NADH. Mg(2+)-binding residues include aspartate 204, aspartate 228, and aspartate 232. Residues 261-265 (GSAPD) and asparagine 273 contribute to the NADH site.

It belongs to the isocitrate and isopropylmalate dehydrogenases family. As to quaternary structure, homotetramer. Dimer of dimers. The homotetramer can transiently dissociate into homodimers. The cofactor is Mg(2+).

It carries out the reaction (2R,3S)-homoisocitrate + NAD(+) = 2-oxoadipate + CO2 + NADH. It catalyses the reaction D-threo-isocitrate + NAD(+) = 2-oxoglutarate + CO2 + NADH. It functions in the pathway amino-acid biosynthesis; L-lysine biosynthesis via AAA pathway; L-alpha-aminoadipate from 2-oxoglutarate: step 4/5. Functionally, catalyzes the NAD(+)-dependent oxidative decarboxylation of homoisocitrate to 2-oxoadipate (alpha-ketoadipate), a reaction involved in lysine biosynthesis through the alpha-aminoadipate pathway. In addition, has high activity with isocitrate, but is inactive with 3-isopropylmalate. In Thermus thermophilus (strain ATCC BAA-163 / DSM 7039 / HB27), this protein is Isocitrate/homoisocitrate dehydrogenase (hicd).